The following is a 696-amino-acid chain: Solute carrier family 53 member 1 (696 aa).

The Cytoplasmic portion of the chain corresponds to 1–228 (MKFAEHLSAH…RVPPLGAAQP (228 aa)). Residues 2-224 (KFAEHLSAHI…MKRLRVPPLG (223 aa)) enclose the SPX domain. An important for inositol polyphosphate binding region spans residues 158 to 165 (KILKKHDK). A helical membrane pass occupies residues 229 to 259 (APAWTTFRVGLFCGIFIVLNITLVLAAVFKL). The Extracellular portion of the chain corresponds to 260–264 (ETDRS). The chain crosses the membrane as a helical span at residues 265–296 (IWPLIRIYRGGFLLIEFLFLLGINTYGWRQAG). Residues 297 to 309 (VNHVLIFELNPRS) lie on the Cytoplasmic side of the membrane. A helical membrane pass occupies residues 310-337 (NLSHQHLFEIAGFLGILWCLSLLACFFA). Topologically, residues 338-343 (PISVIP) are extracellular. The chain crosses the membrane as a helical span at residues 344-365 (TYVYPLALYGFMVFFLINPTKT). Residues 366–383 (FYYKSRFWLLKLLFRVFT) constitute an intramembrane region (helical). Topologically, residues 384-388 (APFHK) are cytoplasmic. A discontinuously helical membrane pass occupies residues 389-422 (VGFADFWLADQLNSLSVILMDLEYMICFYSLELK). 2 residues coordinate phosphate: D398 and N401. Residues 423 to 429 (WDESKGL) are Extracellular-facing. The discontinuously helical transmembrane segment at 430-471 (LPNNSEESGICHKYTYGVRAIVQCIPAWLRFIQCLRRYRDTK) threads the bilayer. One can recognise an EXS domain in the interval 439–643 (ICHKYTYGVR…LNADDQTLLE (205 aa)). Position 472 (R472) is a topological domain, cytoplasmic. A helical membrane pass occupies residues 473 to 503 (AFPHLVNAGKYSTTFFMVTFAALYSTHKERG). The phosphate site is built by K482 and Y483. Over 504 to 506 (HSD) the chain is Extracellular. The chain crosses the membrane as a helical span at residues 507-534 (TMVFFYLWIVFYIISSCYTLIWDLKMDW). At 535–553 (GLFDKNAGENTFLREEIVY) the chain is on the cytoplasmic side. A discontinuously helical transmembrane segment spans residues 554-585 (PQKAYYYCAIIEDVILRFAWTIQISITSTTLL). Residue R570 coordinates phosphate. Residues 586–587 (PH) are Extracellular-facing. The chain crosses the membrane as a helical span at residues 588–626 (SGDIIATVFAPLEVFRRFVWNFFRLENEHLNNCGEFRAV). Phosphate is bound by residues R603 and R604. At 627-696 (RDISVAPLNA…IEDTDDEANT (70 aa)) the chain is on the cytoplasmic side. S668 carries the post-translational modification Phosphoserine. Residues 673–696 (RLASQSKARDTKVLIEDTDDEANT) are disordered. T690 is subject to Phosphothreonine.

It belongs to the SYG1 (TC 2.A.94) family. As to quaternary structure, homodimer. Widely expressed. Detected in spleen, lymph node, thymus, leukocytes, bone marrow, heart, kidney, pancreas and skeletal muscle.

Its subcellular location is the cell membrane. The enzyme catalyses phosphate(in) = phosphate(out). Its activity is regulated as follows. Allosterically activated by inositol hexakisphosphate (Ins6P). Inorganic ion transporter that mediates phosphate ion export across plasma membrane. Plays a major role in phosphate homeostasis, preventing intracellular phosphate accumulation and possible calcium phosphate precipitation, ultimately preserving calcium signaling. Binds inositol hexakisphosphate (Ins6P) and similar inositol polyphosphates, such as 5-diphospho-inositol pentakisphosphate (5-InsP7), which are important intracellular signaling molecules involved in regulation of phosphate flux. This Homo sapiens (Human) protein is Solute carrier family 53 member 1.